Reading from the N-terminus, the 445-residue chain is Ribosomal protein uS12 methylthiotransferase RimO (445 aa).

The region spanning 10–120 (PKVGFVSLGC…VVNAVHEVVP (111 aa)) is the MTTase N-terminal domain. Cys-19, Cys-55, Cys-84, Cys-153, Cys-157, and Cys-160 together coordinate [4Fe-4S] cluster. In terms of domain architecture, Radical SAM core spans 139–378 (LTPRHYAYLK…AHQQAISSAR (240 aa)). A TRAM domain is found at 380–445 (QLRIGREIEV…DEYDLWAEQI (66 aa)).

It belongs to the methylthiotransferase family. RimO subfamily. Requires [4Fe-4S] cluster as cofactor.

The protein localises to the cytoplasm. The catalysed reaction is L-aspartate(89)-[ribosomal protein uS12]-hydrogen + (sulfur carrier)-SH + AH2 + 2 S-adenosyl-L-methionine = 3-methylsulfanyl-L-aspartate(89)-[ribosomal protein uS12]-hydrogen + (sulfur carrier)-H + 5'-deoxyadenosine + L-methionine + A + S-adenosyl-L-homocysteine + 2 H(+). Catalyzes the methylthiolation of an aspartic acid residue of ribosomal protein uS12. The polypeptide is Ribosomal protein uS12 methylthiotransferase RimO (Pseudomonas fluorescens (strain Pf0-1)).